The chain runs to 58 residues: Small ribosomal subunit protein bS21 (58 aa).

A disordered region spans residues 25–58; sequence SKSGTLQEYRKREHYEKPSVKRKKKSEAARKRKF. Residues 32–43 show a composition bias toward basic and acidic residues; it reads EYRKREHYEKPS. Positions 44 to 58 are enriched in basic residues; it reads VKRKKKSEAARKRKF.

It belongs to the bacterial ribosomal protein bS21 family.

The chain is Small ribosomal subunit protein bS21 from Oceanobacillus iheyensis (strain DSM 14371 / CIP 107618 / JCM 11309 / KCTC 3954 / HTE831).